The following is a 199-amino-acid chain: LIM domain-containing protein E (199 aa).

The 61-residue stretch at 5 to 65 (VKCGACAKTA…PVHTPKVSAT (61 aa)) folds into the LIM zinc-binding domain. The segment at 134 to 199 (YAVFGADGQP…EEEQQYEEEQ (66 aa)) is disordered. Low complexity-rich tracts occupy residues 146–155 (EQQEQQQYTE) and 163–174 (EEQQYQEEQQQY). Positions 175–199 (QEEEQQYQEEEQQYQEEEQQYEEEQ) are enriched in acidic residues.

May interact with rac1A.

It localises to the cytoplasm. The protein localises to the cell cortex. Its subcellular location is the nucleus. The protein resides in the cell projection. It is found in the lamellipodium. It localises to the filopodium. The protein localises to the cytoskeleton. Its function is as follows. Associates with the actin cytoskeleton and may regulate actin polymerization in lamellipodia, through a rac1-dependent signaling pathway. May play a role in cell motility. Involved in cytokinesis by regulating the microtubule system and linking it to the cortical actin network. In Dictyostelium discoideum (Social amoeba), this protein is LIM domain-containing protein E (limE).